Reading from the N-terminus, the 235-residue chain is Uridylate kinase (235 aa).

9-12 contributes to the ATP binding site; it reads KLSG. UMP is bound at residue G51. ATP contacts are provided by G52 and R56. UMP contacts are provided by residues D71 and 133–140; that span reads SGNPFFTT. The ATP site is built by T160, Y166, and D169.

This sequence belongs to the UMP kinase family. Homohexamer.

Its subcellular location is the cytoplasm. It catalyses the reaction UMP + ATP = UDP + ADP. It functions in the pathway pyrimidine metabolism; CTP biosynthesis via de novo pathway; UDP from UMP (UMPK route): step 1/1. With respect to regulation, inhibited by UTP. In terms of biological role, catalyzes the reversible phosphorylation of UMP to UDP. This is Uridylate kinase from Gloeobacter violaceus (strain ATCC 29082 / PCC 7421).